The sequence spans 197 residues: Caspase recruitment domain-containing protein 16 (197 aa).

Residues 1–91 (MADKVLKEKR…YLAETLGLSA (91 aa)) form the CARD domain.

As to quaternary structure, homooligomer. Interacts with CASP1, CASP4, CARD8 and RIPK2. In terms of tissue distribution, widely expressed. Expressed at higher level in placenta, spleen, lymph node and bone marrow. Weakly or not expressed in thymus.

Functionally, caspase inhibitor. Acts as a regulator of procaspase-1/CASP1 activation implicated in the regulation of the proteolytic maturation of pro-interleukin-1 beta (IL1B) and its release during inflammation. Inhibits the release of IL1B in response to LPS in monocytes. Also induces NF-kappa-B activation during the pro-inflammatory cytokine response. Also able to inhibit CASP1-mediated neuronal cell death, TNF-alpha, hypoxia-, UV-, and staurosporine-mediated cell death but not ER stress-mediated cell death. Acts by preventing activation of caspases CASP1 and CASP4, possibly by preventing the interaction between CASP1 and RIPK2. The chain is Caspase recruitment domain-containing protein 16 (CARD16) from Homo sapiens (Human).